The primary structure comprises 449 residues: Endoglucanase A (449 aa).

Residues 1 to 31 (MSTRRTAAALLAAAAVAVGGLTALTTTAAQA) constitute a signal peptide (tat-type signal). A CBM2 domain is found at 32–137 (APGCRVDYAV…SLNGTTCTGT (106 aa)). An intrachain disulfide couples Cys-35 to Cys-134. The segment at 127–170 (FSLNGTTCTGTVPTTSPTPTPTPTTPTPTPTPTPTPTPTVTPQP) is disordered. The segment covering 132-141 (TTCTGTVPTT) has biased composition (low complexity). The segment at 139–168 (PTTSPTPTPTPTTPTPTPTPTPTPTPTVTP) is linker ('hinge') (Pro-Thr box). Over residues 142-167 (SPTPTPTPTTPTPTPTPTPTPTPTVT) the composition is skewed to pro residues. Asp-247 is a catalytic residue. 2 disulfides stabilise this stretch: Cys-248–Cys-291 and Cys-390–Cys-426. The active-site Proton donor is the Asp-283. The active-site Nucleophile is the Asp-423. The catalytic stretch occupies residues 438–449 (EIALEMARNARW).

Belongs to the glycosyl hydrolase 6 (cellulase B) family. The linker region (also termed 'hinge') may be a potential site for proteolysis. In terms of processing, predicted to be exported by the Tat system. The position of the signal peptide cleavage has not been experimentally proven.

The enzyme catalyses Endohydrolysis of (1-&gt;4)-beta-D-glucosidic linkages in cellulose, lichenin and cereal beta-D-glucans.. Its function is as follows. The biological conversion of cellulose to glucose generally requires three types of hydrolytic enzymes: (1) Endoglucanases which cut internal beta-1,4-glucosidic bonds; (2) Exocellobiohydrolases that cut the disaccharide cellobiose from the non-reducing end of the cellulose polymer chain; (3) Beta-1,4-glucosidases which hydrolyze the cellobiose and other short cello-oligosaccharides to glucose. The sequence is that of Endoglucanase A (cenA) from Cellulomonas fimi.